The sequence spans 446 residues: Sensor-type histidine kinase PrrB (446 aa).

A run of 2 helical transmembrane segments spans residues 19 to 39 (VVAT…VVWV) and 151 to 171 (LLIC…LAAF). In terms of domain architecture, HAMP spans 172-222 (AVRPFKQLAEQTRSIDAGDEAPRVEVHGASEAIEIAEAMRGMLQRIWNEQN). Residues 237–446 (VSSHELRTPL…RLVLRLPGPS (210 aa)) enclose the Histidine kinase domain. A Phosphohistidine; by autocatalysis modification is found at His240.

Autophosphorylated.

It localises to the cell membrane. It carries out the reaction ATP + protein L-histidine = ADP + protein N-phospho-L-histidine.. In terms of biological role, member of the two-component regulatory system PrrB/PrrA that is involved specifically in early intracellular multiplication of Mycobacterium and is essential for its viability. Functions as a sensor protein kinase which is autophosphorylated at a histidine residue and transfers its phosphate group to the conserved aspartic acid residue in the regulatory domain of PrrA. In turn, PrrA binds to the upstream promoter regions of target genes including itself to positively regulate their expression. In Mycobacterium bovis (strain ATCC BAA-935 / AF2122/97), this protein is Sensor-type histidine kinase PrrB (prrB).